Reading from the N-terminus, the 230-residue chain is Modulator of macroautophagy TMEM150B (230 aa).

Methionine 1 is a topological domain (cytoplasmic). Residues 2–22 (WAWALLPICLTIWATAGIWIV) form a helical membrane-spanning segment. The Extracellular portion of the chain corresponds to 23-50 (YGMSVSNGSVNLTDGFPFISLCGTYPPQ). N-linked (GlcNAc...) asparagine glycans are attached at residues asparagine 29 and asparagine 33. Residues 51–71 (SCVFGQVLNVGAMLGVWISVI) traverse the membrane as a helical segment. Over 72 to 83 (RFQQIRDYGCHS) the chain is Cytoplasmic. Residues 84 to 104 (VLNSVSLAMGLLCALGTSIVG) form a helical membrane-spanning segment. The Extracellular portion of the chain corresponds to 105–115 (NFQQSNQLETH). The chain crosses the membrane as a helical span at residues 116–136 (LAGAFLAFVIGNIYFWMQTVL). Over 137–150 (TYMVKPKHGGCYIG) the chain is Cytoplasmic. A helical membrane pass occupies residues 151 to 171 (PIRFCLSVACTALIVLMAVFL). Topologically, residues 172 to 183 (KLNMKSISAICE) are extracellular. A helical transmembrane segment spans residues 184–204 (WIVAMILFLLYGLFSVDFWHL). Residues 205 to 230 (DGHYFHVKKRTAIPNEVEVSTVTLNI) lie on the Cytoplasmic side of the membrane.

The protein belongs to the DRAM/TMEM150 family.

The protein localises to the cell membrane. It localises to the endosome membrane. Its subcellular location is the cytoplasmic vesicle. It is found in the autophagosome membrane. Functionally, modulator of macroautophagy that causes accumulation of autophagosomes under basal conditions and enhances autophagic flux. Represses cell death and promotes long-term clonogenic survival of cells grown in the absence of glucose in a macroautophagy-independent manner. May have some role in extracellular matrix engulfment or growth factor receptor recycling, both of which can modulate cell survival. The polypeptide is Modulator of macroautophagy TMEM150B (Xenopus tropicalis (Western clawed frog)).